Here is a 465-residue protein sequence, read N- to C-terminus: Gamma-aminobutyric acid receptor subunit gamma-1 (465 aa).

The N-terminal stretch at 1–35 is a signal peptide; the sequence is MGPLKAFLFSPFLLRSQSRGVRLVFLLLTLHLGNC. Residues 36–273 lie on the Extracellular side of the membrane; it reads VDKADDEDDE…FDLSRRMGYF (238 aa). N50 and N127 each carry an N-linked (GlcNAc...) asparagine glycan. An intrachain disulfide couples C188 to C202. N245 is a glycosylation site (N-linked (GlcNAc...) asparagine). Residues 274–294 traverse the membrane as a helical segment; sequence TIQTYIPCILTVVLSWVSFWI. Residues 295 to 300 are Cytoplasmic-facing; that stretch reads NKDAVP. The helical transmembrane segment at 301–320 threads the bilayer; the sequence is ARTSLGITTVLTMTTLSTIA. At 321–328 the chain is on the extracellular side; the sequence is RKSLPKVS. Residues 329-349 form a helical membrane-spanning segment; that stretch reads YVTAMDLFVSVCFIFVFAALM. Residues 350–444 are Cytoplasmic-facing; that stretch reads EYGTLHYFTS…RIAKIDSYSR (95 aa). A helical membrane pass occupies residues 445–465; it reads IFFPTAFALFNLVYWVGYLYL.

It belongs to the ligand-gated ion channel (TC 1.A.9) family. Gamma-aminobutyric acid receptor (TC 1.A.9.5) subfamily. GABRG1 sub-subfamily. In terms of assembly, heteropentamer, formed by a combination of alpha (GABRA1-6), beta (GABRB1-3), gamma (GABRG1-3), delta (GABRD), epsilon (GABRE), rho (GABRR1-3), pi (GABRP) and theta (GABRQ) chains, each subunit exhibiting distinct physiological and pharmacological properties. Post-translationally, may be palmitoylated.

Its subcellular location is the postsynaptic cell membrane. It is found in the cell membrane. It carries out the reaction chloride(in) = chloride(out). In terms of biological role, gamma subunit of the heteropentameric ligand-gated chloride channel gated by gamma-aminobutyric acid (GABA), a major inhibitory neurotransmitter in the brain. GABA-gated chloride channels, also named GABA(A) receptors (GABAAR), consist of five subunits arranged around a central pore and contain GABA active binding site(s) located at the alpha and beta subunit interface(s). When activated by GABA, GABAARs selectively allow the flow of chloride anions across the cell membrane down their electrochemical gradient. Chloride influx into the postsynaptic neuron following GABAAR opening decreases the neuron ability to generate a new action potential, thereby reducing nerve transmission. The sequence is that of Gamma-aminobutyric acid receptor subunit gamma-1 from Homo sapiens (Human).